The sequence spans 599 residues: Elongation factor 4 (599 aa).

The 183-residue stretch at 5-187 (NHIRNFSIIA…QIVQLVPPPE (183 aa)) folds into the tr-type G domain. Residues 17-22 (DHGKST) and 134-137 (NKMD) contribute to the GTP site.

It belongs to the TRAFAC class translation factor GTPase superfamily. Classic translation factor GTPase family. LepA subfamily.

Its subcellular location is the cell inner membrane. The catalysed reaction is GTP + H2O = GDP + phosphate + H(+). In terms of biological role, required for accurate and efficient protein synthesis under certain stress conditions. May act as a fidelity factor of the translation reaction, by catalyzing a one-codon backward translocation of tRNAs on improperly translocated ribosomes. Back-translocation proceeds from a post-translocation (POST) complex to a pre-translocation (PRE) complex, thus giving elongation factor G a second chance to translocate the tRNAs correctly. Binds to ribosomes in a GTP-dependent manner. This chain is Elongation factor 4, found in Hahella chejuensis (strain KCTC 2396).